The sequence spans 129 residues: Putative pre-16S rRNA nuclease (129 aa).

This sequence belongs to the YqgF nuclease family.

The protein localises to the cytoplasm. Functionally, could be a nuclease involved in processing of the 5'-end of pre-16S rRNA. The protein is Putative pre-16S rRNA nuclease of Campylobacter jejuni subsp. doylei (strain ATCC BAA-1458 / RM4099 / 269.97).